A 182-amino-acid polypeptide reads, in one-letter code: MPLDFNEIRQLLTTIAQTDIAEVTLKSDDFELTVRKAVGVNNSVVPVVTAPLSGVVGSGLPSAIPIVAHAAPSPSPEPGTSRAADHAVTSSGSQPGAKIIDQKLAEVASPMVGTFYRAPAPGEAVFVEVGDRIRQGQTVCIIEAMKLMNEIEADVSGQVIEILVQNGEPVEYNQPLMRIKPD.

The interval 70–95 is disordered; it reads AAPSPSPEPGTSRAADHAVTSSGSQP. One can recognise a Biotinyl-binding domain in the interval 104-180; the sequence is LAEVASPMVG…EYNQPLMRIK (77 aa). N6-biotinyllysine is present on lysine 146.

Homodimer.

It functions in the pathway lipid metabolism; fatty acid biosynthesis. Its function is as follows. This protein is a component of the acetyl coenzyme A carboxylase complex; first, biotin carboxylase catalyzes the carboxylation of the carrier protein and then the transcarboxylase transfers the carboxyl group to form malonyl-CoA. The polypeptide is Biotin carboxyl carrier protein of acetyl-CoA carboxylase (accB) (Nostoc sp. (strain PCC 7120 / SAG 25.82 / UTEX 2576)).